The chain runs to 426 residues: Glutamyl-tRNA reductase (426 aa).

Substrate contacts are provided by residues 49 to 52 (TCNR), serine 109, 114 to 116 (EGQ), and glutamine 120. The active-site Nucleophile is the cysteine 50. Residue 189 to 194 (GAGETG) participates in NADP(+) binding.

The protein belongs to the glutamyl-tRNA reductase family. Homodimer.

It catalyses the reaction (S)-4-amino-5-oxopentanoate + tRNA(Glu) + NADP(+) = L-glutamyl-tRNA(Glu) + NADPH + H(+). It participates in porphyrin-containing compound metabolism; protoporphyrin-IX biosynthesis; 5-aminolevulinate from L-glutamyl-tRNA(Glu): step 1/2. Catalyzes the NADPH-dependent reduction of glutamyl-tRNA(Glu) to glutamate 1-semialdehyde (GSA). The chain is Glutamyl-tRNA reductase (hemA) from Chlorobaculum parvum (strain DSM 263 / NCIMB 8327) (Chlorobium vibrioforme subsp. thiosulfatophilum).